The chain runs to 275 residues: MNTTHVPEPHRTEQHAENQRHWRKILGIAPIVSIAFPATMYFISDEDSFEDSLFLRFITVLLPFSYSAVQYALLHTNWKSHNKPERILQSILYYTLNLLFLAFSIISILSIIAFTLAEWEDDDWENNNDPIIFSFILPSFTVPLTYLLSTSCCLVPGQIGFTDTGINVLVDILILLCSAGDLVPAFDEVKHCYYFAIISSILILIRLLREKLSPEKQSPPPTAPWRIAVFVLILISIVIAYALLAYLIMNADIFDNYYSSLFDKMKNIFSSKPDE.

Belongs to the UPF0328 family.

This is UPF0328 protein ECU05_0050 from Encephalitozoon cuniculi (strain GB-M1) (Microsporidian parasite).